A 383-amino-acid polypeptide reads, in one-letter code: Dual-specificity RNA methyltransferase RlmN (383 aa).

Glutamate 95 serves as the catalytic Proton acceptor. A Radical SAM core domain is found at 101 to 349 (EETRGTLCVS…TTVRKTRGDD (249 aa)). A disulfide bridge links cysteine 108 with cysteine 354. [4Fe-4S] cluster is bound by residues cysteine 115, cysteine 119, and cysteine 122. S-adenosyl-L-methionine-binding positions include 180–181 (GE), serine 212, 234–236 (SLH), and asparagine 311. Residue cysteine 354 is the S-methylcysteine intermediate of the active site.

This sequence belongs to the radical SAM superfamily. RlmN family. Requires [4Fe-4S] cluster as cofactor.

The protein resides in the cytoplasm. It catalyses the reaction adenosine(2503) in 23S rRNA + 2 reduced [2Fe-2S]-[ferredoxin] + 2 S-adenosyl-L-methionine = 2-methyladenosine(2503) in 23S rRNA + 5'-deoxyadenosine + L-methionine + 2 oxidized [2Fe-2S]-[ferredoxin] + S-adenosyl-L-homocysteine. The enzyme catalyses adenosine(37) in tRNA + 2 reduced [2Fe-2S]-[ferredoxin] + 2 S-adenosyl-L-methionine = 2-methyladenosine(37) in tRNA + 5'-deoxyadenosine + L-methionine + 2 oxidized [2Fe-2S]-[ferredoxin] + S-adenosyl-L-homocysteine. Specifically methylates position 2 of adenine 2503 in 23S rRNA and position 2 of adenine 37 in tRNAs. m2A2503 modification seems to play a crucial role in the proofreading step occurring at the peptidyl transferase center and thus would serve to optimize ribosomal fidelity. This is Dual-specificity RNA methyltransferase RlmN from Paraburkholderia xenovorans (strain LB400).